The following is a 100-amino-acid chain: Aspartyl/glutamyl-tRNA(Asn/Gln) amidotransferase subunit C (100 aa).

The protein belongs to the GatC family. As to quaternary structure, heterotrimer of A, B and C subunits.

It catalyses the reaction L-glutamyl-tRNA(Gln) + L-glutamine + ATP + H2O = L-glutaminyl-tRNA(Gln) + L-glutamate + ADP + phosphate + H(+). It carries out the reaction L-aspartyl-tRNA(Asn) + L-glutamine + ATP + H2O = L-asparaginyl-tRNA(Asn) + L-glutamate + ADP + phosphate + 2 H(+). Its function is as follows. Allows the formation of correctly charged Asn-tRNA(Asn) or Gln-tRNA(Gln) through the transamidation of misacylated Asp-tRNA(Asn) or Glu-tRNA(Gln) in organisms which lack either or both of asparaginyl-tRNA or glutaminyl-tRNA synthetases. The reaction takes place in the presence of glutamine and ATP through an activated phospho-Asp-tRNA(Asn) or phospho-Glu-tRNA(Gln). The polypeptide is Aspartyl/glutamyl-tRNA(Asn/Gln) amidotransferase subunit C (Rickettsia felis (strain ATCC VR-1525 / URRWXCal2) (Rickettsia azadi)).